The primary structure comprises 365 residues: Glucan endo-1,3-beta-glucosidase, basic vacuolar isoform (365 aa).

A signal peptide spans 1–32; sequence MSTLHKHNTPQMAAITLLGLLLVASSIEIAGA. Catalysis depends on E128, which acts as the Proton donor. The Nucleophile role is filled by E273. Positions 349-365 are cleaved as a propeptide — removed in mature form; the sequence is VSGSVETNATASLISEI. N356 carries N-linked (GlcNAc...) asparagine glycosylation.

This sequence belongs to the glycosyl hydrolase 17 family.

The protein localises to the vacuole. It carries out the reaction Hydrolysis of (1-&gt;3)-beta-D-glucosidic linkages in (1-&gt;3)-beta-D-glucans.. Functionally, implicated in the defense of plants against pathogens. The chain is Glucan endo-1,3-beta-glucosidase, basic vacuolar isoform (GN2) from Nicotiana plumbaginifolia (Leadwort-leaved tobacco).